A 37-amino-acid chain; its full sequence is Large ribosomal subunit protein bL36c (37 aa).

The protein belongs to the bacterial ribosomal protein bL36 family.

It is found in the plastid. It localises to the chloroplast. This is Large ribosomal subunit protein bL36c from Bigelowiella natans (Pedinomonas minutissima).